The primary structure comprises 242 residues: Putative ABC transporter ATP-binding protein TTE0246 (242 aa).

The 238-residue stretch at 5 to 242 (FELKNVSYFY…EKLLLKANLI (238 aa)) folds into the ABC transporter domain. ATP is bound at residue 38 to 45 (GANGSGKS).

The protein belongs to the ABC transporter superfamily.

The protein resides in the cell membrane. Functionally, probably part of an ABC transporter complex. Responsible for energy coupling to the transport system. The polypeptide is Putative ABC transporter ATP-binding protein TTE0246 (Caldanaerobacter subterraneus subsp. tengcongensis (strain DSM 15242 / JCM 11007 / NBRC 100824 / MB4) (Thermoanaerobacter tengcongensis)).